The following is a 408-amino-acid chain: uncharacterized protein (408 aa).

8 consecutive 4Fe-4S ferredoxin-type domains span residues I42–N72, K78–H107, S122–G151, G151–E181, K212–K241, G233–P265, I273–E302, and K304–P333. [4Fe-4S] cluster contacts are provided by C52, C55, C58, C62, C87, C90, C93, C97, C131, C134, C137, C141, C160, C163, C166, and C170. C282, C285, C288, and C292 together coordinate [4Fe-4S] cluster.

This is an uncharacterized protein from Methanocaldococcus jannaschii (strain ATCC 43067 / DSM 2661 / JAL-1 / JCM 10045 / NBRC 100440) (Methanococcus jannaschii).